The following is a 274-amino-acid chain: NADPH-dependent 7-cyano-7-deazaguanine reductase (274 aa).

80–82 (VES) contacts substrate. Residue 82–83 (SK) coordinates NADPH. The active-site Thioimide intermediate is Cys-181. The active-site Proton donor is the Asp-188. Residue 220-221 (HE) coordinates substrate. Position 249–250 (249–250 (RG)) interacts with NADPH.

The protein belongs to the GTP cyclohydrolase I family. QueF type 2 subfamily. Homodimer.

The protein localises to the cytoplasm. The enzyme catalyses 7-aminomethyl-7-carbaguanine + 2 NADP(+) = 7-cyano-7-deazaguanine + 2 NADPH + 3 H(+). It participates in tRNA modification; tRNA-queuosine biosynthesis. Functionally, catalyzes the NADPH-dependent reduction of 7-cyano-7-deazaguanine (preQ0) to 7-aminomethyl-7-deazaguanine (preQ1). The sequence is that of NADPH-dependent 7-cyano-7-deazaguanine reductase from Burkholderia pseudomallei (strain 1106a).